We begin with the raw amino-acid sequence, 837 residues long: Zinc fingers and homeoboxes protein 2 (837 aa).

The interaction with EFNB1 stretch occupies residues 27–77 (VDRAKEKGIGTPQPDVAKDSWAAELENSSKENEVIEVKSMGESQSKKLQGG). T37 is subject to Phosphothreonine. A Glycyl lysine isopeptide (Lys-Gly) (interchain with G-Cter in SUMO2) cross-link involves residue K64. C2H2-type zinc fingers lie at residues 78–101 (YECKYCPYSTQNLNEFTEHVDMQH) and 110–133 (YVCAECNFTTKKYDSLSDHNSKFH). Over residues 164–180 (SITTSGPGTGDSDSGIS) the composition is skewed to low complexity. The disordered stretch occupies residues 164–204 (SITTSGPGTGDSDSGISVSKTPIMKPGKPKADAKKVPKKPE). Residues 192–204 (PKADAKKVPKKPE) are compositionally biased toward basic and acidic residues. Positions 195 to 358 (DAKKVPKKPE…PAQLAPTKVT (164 aa)) are required for homodimerization. T207 is modified (phosphothreonine). 4 DNA-binding regions (homeobox) span residues 263–324 (NTTK…WSPE), 439–501 (TPAS…IVHI), 530–591 (PQKF…EQAV), and 628–690 (SPSP…TVKW). The required for repressor activity stretch occupies residues 263–446 (NTTKYNSALD…PLTPASDRKK (184 aa)). The segment at 263–497 (NTTKYNSALD…SDHRYRCQRG (235 aa)) is required for interaction with NFYA. Positions 317 to 446 (HGISWSPEEV…PLTPASDRKK (130 aa)) are required for nuclear localization. A disordered region spans residues 404–445 (GQKRPLVTPQAAPEPKRPHIAQVPEPPPKVANPPLTPASDRK). A compositionally biased stretch (pro residues) spans 427–439 (PEPPPKVANPPLT). K455 participates in a covalent cross-link: Glycyl lysine isopeptide (Lys-Gly) (interchain with G-Cter in SUMO2). The disordered stretch occupies residues 755–837 (PAKDCLPAKP…DCVPAEAGQA (83 aa)). S825 and S827 each carry phosphoserine.

The protein belongs to the ZHX family. In terms of assembly, homodimer (via homeobox domain). Heterodimer with ZHX1 (via homeobox domain 1). Heterodimer with ZHX3 (via homeobox domain 1). Heterodimerization with ZHX1 is not necessary for repressor activity. Interacts (via homeobox domain) with NFYA (via N-terminus). Interacts with EFNB1 intracellular domain peptide; the interaction enhances ZHX2 transcriptional repression activity. In terms of tissue distribution, ubiquitously expressed. Expressed in podocytes.

Its subcellular location is the nucleus. Functionally, acts as a transcriptional repressor. Represses the promoter activity of the CDC25C gene stimulated by NFYA. May play a role in retinal development where it regulates the composition of bipolar cell populations, by promoting differentiation of bipolar OFF-type cells. In the brain, may promote maintenance and suppress differentiation of neural progenitor cells in the developing cortex. The sequence is that of Zinc fingers and homeoboxes protein 2 (ZHX2) from Homo sapiens (Human).